A 511-amino-acid polypeptide reads, in one-letter code: 2,3-bisphosphoglycerate-independent phosphoglycerate mutase (511 aa).

Mn(2+) is bound by residues D14 and S64. S64 serves as the catalytic Phosphoserine intermediate. Residues H125, R155–D156, R187, R193, R259–R262, and K333 contribute to the substrate site. Residues D400, H404, D441, H442, and H460 each coordinate Mn(2+).

It belongs to the BPG-independent phosphoglycerate mutase family. Monomer. It depends on Mn(2+) as a cofactor.

It carries out the reaction (2R)-2-phosphoglycerate = (2R)-3-phosphoglycerate. It functions in the pathway carbohydrate degradation; glycolysis; pyruvate from D-glyceraldehyde 3-phosphate: step 3/5. Functionally, catalyzes the interconversion of 2-phosphoglycerate and 3-phosphoglycerate. This chain is 2,3-bisphosphoglycerate-independent phosphoglycerate mutase, found in Pseudomonas putida (strain GB-1).